The sequence spans 183 residues: Ribose 1,5-bisphosphate phosphokinase PhnN (183 aa).

6 to 13 (GPSGAGKD) serves as a coordination point for ATP.

This sequence belongs to the ribose 1,5-bisphosphokinase family.

The enzyme catalyses alpha-D-ribose 1,5-bisphosphate + ATP = 5-phospho-alpha-D-ribose 1-diphosphate + ADP. The protein operates within metabolic intermediate biosynthesis; 5-phospho-alpha-D-ribose 1-diphosphate biosynthesis; 5-phospho-alpha-D-ribose 1-diphosphate from D-ribose 5-phosphate (route II): step 3/3. Functionally, catalyzes the phosphorylation of ribose 1,5-bisphosphate to 5-phospho-D-ribosyl alpha-1-diphosphate (PRPP). In Agrobacterium fabrum (strain C58 / ATCC 33970) (Agrobacterium tumefaciens (strain C58)), this protein is Ribose 1,5-bisphosphate phosphokinase PhnN.